Reading from the N-terminus, the 331-residue chain is Ketol-acid reductoisomerase (NADP(+)) (331 aa).

In terms of domain architecture, KARI N-terminal Rossmann spans 2–182 (ARMYYDEDGN…GGTRAGILET (181 aa)). NADP(+) is bound by residues 25 to 28 (YGSQ), serine 51, serine 53, and 83 to 86 (DEVQ). Residue histidine 108 is part of the active site. Glycine 134 is an NADP(+) binding site. The KARI C-terminal knotted domain maps to 183–328 (SFREETETDL…KDLRAMFSWL (146 aa)). 4 residues coordinate Mg(2+): aspartate 191, glutamate 195, glutamate 227, and glutamate 231. Serine 252 lines the substrate pocket.

It belongs to the ketol-acid reductoisomerase family. Requires Mg(2+) as cofactor.

It carries out the reaction (2R)-2,3-dihydroxy-3-methylbutanoate + NADP(+) = (2S)-2-acetolactate + NADPH + H(+). It catalyses the reaction (2R,3R)-2,3-dihydroxy-3-methylpentanoate + NADP(+) = (S)-2-ethyl-2-hydroxy-3-oxobutanoate + NADPH + H(+). The protein operates within amino-acid biosynthesis; L-isoleucine biosynthesis; L-isoleucine from 2-oxobutanoate: step 2/4. It participates in amino-acid biosynthesis; L-valine biosynthesis; L-valine from pyruvate: step 2/4. Involved in the biosynthesis of branched-chain amino acids (BCAA). Catalyzes an alkyl-migration followed by a ketol-acid reduction of (S)-2-acetolactate (S2AL) to yield (R)-2,3-dihydroxy-isovalerate. In the isomerase reaction, S2AL is rearranged via a Mg-dependent methyl migration to produce 3-hydroxy-3-methyl-2-ketobutyrate (HMKB). In the reductase reaction, this 2-ketoacid undergoes a metal-dependent reduction by NADPH to yield (R)-2,3-dihydroxy-isovalerate. This is Ketol-acid reductoisomerase (NADP(+)) from Gloeothece citriformis (strain PCC 7424) (Cyanothece sp. (strain PCC 7424)).